A 356-amino-acid polypeptide reads, in one-letter code: Probable dual-specificity RNA methyltransferase RlmN (356 aa).

The Proton acceptor role is filled by Glu97. A Radical SAM core domain is found at 103-333 (YHHGNSVCIS…VTIRREMGSD (231 aa)). Cys110 and Cys338 are joined by a disulfide. [4Fe-4S] cluster contacts are provided by Cys117, Cys121, and Cys124. S-adenosyl-L-methionine contacts are provided by residues 164-165 (GE), Ser196, 219-221 (SLH), and Asn295. Cys338 acts as the S-methylcysteine intermediate in catalysis.

Belongs to the radical SAM superfamily. RlmN family. [4Fe-4S] cluster serves as cofactor.

Its subcellular location is the cytoplasm. It carries out the reaction adenosine(2503) in 23S rRNA + 2 reduced [2Fe-2S]-[ferredoxin] + 2 S-adenosyl-L-methionine = 2-methyladenosine(2503) in 23S rRNA + 5'-deoxyadenosine + L-methionine + 2 oxidized [2Fe-2S]-[ferredoxin] + S-adenosyl-L-homocysteine. It catalyses the reaction adenosine(37) in tRNA + 2 reduced [2Fe-2S]-[ferredoxin] + 2 S-adenosyl-L-methionine = 2-methyladenosine(37) in tRNA + 5'-deoxyadenosine + L-methionine + 2 oxidized [2Fe-2S]-[ferredoxin] + S-adenosyl-L-homocysteine. In terms of biological role, specifically methylates position 2 of adenine 2503 in 23S rRNA and position 2 of adenine 37 in tRNAs. This is Probable dual-specificity RNA methyltransferase RlmN from Lachnoclostridium phytofermentans (strain ATCC 700394 / DSM 18823 / ISDg) (Clostridium phytofermentans).